The chain runs to 734 residues: Elongation factor 2 (734 aa).

The tr-type G domain occupies 18 to 259 (EQIRNIGITA…MVVKYVPNPR (242 aa)). GTP contacts are provided by residues 27–34 (AHVDHGKT), 93–97 (DTPGH), and 147–150 (NKID). His-600 is subject to Diphthamide.

It belongs to the TRAFAC class translation factor GTPase superfamily. Classic translation factor GTPase family. EF-G/EF-2 subfamily.

It is found in the cytoplasm. Functionally, catalyzes the GTP-dependent ribosomal translocation step during translation elongation. During this step, the ribosome changes from the pre-translocational (PRE) to the post-translocational (POST) state as the newly formed A-site-bound peptidyl-tRNA and P-site-bound deacylated tRNA move to the P and E sites, respectively. Catalyzes the coordinated movement of the two tRNA molecules, the mRNA and conformational changes in the ribosome. The protein is Elongation factor 2 (fusA) of Desulfurococcus mucosus (Desulfurococcus mobilis).